The sequence spans 103 residues: Small ribosomal subunit protein uS10 (103 aa).

The protein belongs to the universal ribosomal protein uS10 family. Part of the 30S ribosomal subunit.

Its function is as follows. Involved in the binding of tRNA to the ribosomes. This Shewanella baltica (strain OS223) protein is Small ribosomal subunit protein uS10.